Reading from the N-terminus, the 130-residue chain is Small ribosomal subunit protein uS8 (130 aa).

It belongs to the universal ribosomal protein uS8 family. As to quaternary structure, part of the 30S ribosomal subunit.

One of the primary rRNA binding proteins, it binds directly to 16S rRNA central domain where it helps coordinate assembly of the platform of the 30S subunit. This chain is Small ribosomal subunit protein uS8, found in Korarchaeum cryptofilum (strain OPF8).